Consider the following 177-residue polypeptide: Translation initiation factor IF-3 (177 aa).

It belongs to the IF-3 family. In terms of assembly, monomer.

It localises to the cytoplasm. Its function is as follows. IF-3 binds to the 30S ribosomal subunit and shifts the equilibrium between 70S ribosomes and their 50S and 30S subunits in favor of the free subunits, thus enhancing the availability of 30S subunits on which protein synthesis initiation begins. The chain is Translation initiation factor IF-3 from Rhizobium meliloti (strain 1021) (Ensifer meliloti).